Here is a 374-residue protein sequence, read N- to C-terminus: Queuine tRNA-ribosyltransferase (374 aa).

Asp95 acts as the Proton acceptor in catalysis. Substrate is bound by residues 95–99 (DSGGF), Asp149, Gln191, and Gly218. Positions 249 to 255 (GVGTYRE) are RNA binding. Residue Asp268 is the Nucleophile of the active site. The RNA binding; important for wobble base 34 recognition stretch occupies residues 273–277 (TRWAR). Cys306, Cys308, Cys311, and His337 together coordinate Zn(2+).

The protein belongs to the queuine tRNA-ribosyltransferase family. In terms of assembly, homodimer. Within each dimer, one monomer is responsible for RNA recognition and catalysis, while the other monomer binds to the replacement base PreQ1. Zn(2+) is required as a cofactor.

The catalysed reaction is 7-aminomethyl-7-carbaguanine + guanosine(34) in tRNA = 7-aminomethyl-7-carbaguanosine(34) in tRNA + guanine. The protein operates within tRNA modification; tRNA-queuosine biosynthesis. Its function is as follows. Catalyzes the base-exchange of a guanine (G) residue with the queuine precursor 7-aminomethyl-7-deazaguanine (PreQ1) at position 34 (anticodon wobble position) in tRNAs with GU(N) anticodons (tRNA-Asp, -Asn, -His and -Tyr). Catalysis occurs through a double-displacement mechanism. The nucleophile active site attacks the C1' of nucleotide 34 to detach the guanine base from the RNA, forming a covalent enzyme-RNA intermediate. The proton acceptor active site deprotonates the incoming PreQ1, allowing a nucleophilic attack on the C1' of the ribose to form the product. After dissociation, two additional enzymatic reactions on the tRNA convert PreQ1 to queuine (Q), resulting in the hypermodified nucleoside queuosine (7-(((4,5-cis-dihydroxy-2-cyclopenten-1-yl)amino)methyl)-7-deazaguanosine). The protein is Queuine tRNA-ribosyltransferase of Nostoc sp. (strain PCC 7120 / SAG 25.82 / UTEX 2576).